Reading from the N-terminus, the 1386-residue chain is DNA-directed RNA polymerase subunit beta (1386 aa).

It belongs to the RNA polymerase beta chain family. In plastids the minimal PEP RNA polymerase catalytic core is composed of four subunits: alpha, beta, beta', and beta''. When a (nuclear-encoded) sigma factor is associated with the core the holoenzyme is formed, which can initiate transcription.

It is found in the plastid. The protein localises to the chloroplast. The enzyme catalyses RNA(n) + a ribonucleoside 5'-triphosphate = RNA(n+1) + diphosphate. DNA-dependent RNA polymerase catalyzes the transcription of DNA into RNA using the four ribonucleoside triphosphates as substrates. The sequence is that of DNA-directed RNA polymerase subunit beta from Thalassiosira pseudonana (Marine diatom).